A 1404-amino-acid polypeptide reads, in one-letter code: DNA-directed RNA polymerase subunit beta' (1404 aa).

Residues Cys72, Cys74, Cys87, and Cys90 each coordinate Zn(2+). Mg(2+) is bound by residues Asp463, Asp465, and Asp467. Zn(2+) contacts are provided by Cys811, Cys885, Cys892, and Cys895.

Belongs to the RNA polymerase beta' chain family. The RNAP catalytic core consists of 2 alpha, 1 beta, 1 beta' and 1 omega subunit. When a sigma factor is associated with the core the holoenzyme is formed, which can initiate transcription. Requires Mg(2+) as cofactor. Zn(2+) serves as cofactor.

The catalysed reaction is RNA(n) + a ribonucleoside 5'-triphosphate = RNA(n+1) + diphosphate. Its function is as follows. DNA-dependent RNA polymerase catalyzes the transcription of DNA into RNA using the four ribonucleoside triphosphates as substrates. This chain is DNA-directed RNA polymerase subunit beta', found in Jannaschia sp. (strain CCS1).